We begin with the raw amino-acid sequence, 231 residues long: DNA mismatch repair protein MutH (231 aa).

It belongs to the MutH family.

The protein localises to the cytoplasm. Its function is as follows. Sequence-specific endonuclease that cleaves unmethylated GATC sequences. It is involved in DNA mismatch repair. This chain is DNA mismatch repair protein MutH, found in Salmonella typhi.